The following is a 100-amino-acid chain: Large ribosomal subunit protein uL23 (100 aa).

The protein belongs to the universal ribosomal protein uL23 family. Part of the 50S ribosomal subunit. Contacts protein L29, and trigger factor when it is bound to the ribosome.

Its function is as follows. One of the early assembly proteins it binds 23S rRNA. One of the proteins that surrounds the polypeptide exit tunnel on the outside of the ribosome. Forms the main docking site for trigger factor binding to the ribosome. This Photorhabdus laumondii subsp. laumondii (strain DSM 15139 / CIP 105565 / TT01) (Photorhabdus luminescens subsp. laumondii) protein is Large ribosomal subunit protein uL23.